We begin with the raw amino-acid sequence, 77 residues long: Translation initiation factor IF-1, chloroplastic (77 aa).

The 71-residue stretch at 1 to 71 (MKEQKWIHEG…TRGRIIYRLR (71 aa)) folds into the S1-like domain.

Belongs to the IF-1 family. Component of the 30S ribosomal translation pre-initiation complex which assembles on the 30S ribosome in the order IF-2 and IF-3, IF-1 and N-formylmethionyl-tRNA(fMet); mRNA recruitment can occur at any time during PIC assembly.

The protein resides in the plastid. Its subcellular location is the chloroplast. Functionally, one of the essential components for the initiation of protein synthesis. Stabilizes the binding of IF-2 and IF-3 on the 30S subunit to which N-formylmethionyl-tRNA(fMet) subsequently binds. Helps modulate mRNA selection, yielding the 30S pre-initiation complex (PIC). Upon addition of the 50S ribosomal subunit IF-1, IF-2 and IF-3 are released leaving the mature 70S translation initiation complex. The polypeptide is Translation initiation factor IF-1, chloroplastic (Brexia madagascariensis).